A 27-amino-acid chain; its full sequence is Protein YqiM (27 aa).

The chain is Protein YqiM from Escherichia coli (strain K12).